The chain runs to 404 residues: Cysteine desulfurase IscS (404 aa).

Pyridoxal 5'-phosphate contacts are provided by residues 75–76, Asn-155, Gln-183, and 203–205; these read AT and SAH. Position 206 is an N6-(pyridoxal phosphate)lysine (Lys-206). Thr-243 provides a ligand contact to pyridoxal 5'-phosphate. The active-site Cysteine persulfide intermediate is Cys-328. Cys-328 serves as a coordination point for [2Fe-2S] cluster.

The protein belongs to the class-V pyridoxal-phosphate-dependent aminotransferase family. NifS/IscS subfamily. As to quaternary structure, homodimer. Forms a heterotetramer with IscU, interacts with other sulfur acceptors. It depends on pyridoxal 5'-phosphate as a cofactor.

It is found in the cytoplasm. It carries out the reaction (sulfur carrier)-H + L-cysteine = (sulfur carrier)-SH + L-alanine. The protein operates within cofactor biosynthesis; iron-sulfur cluster biosynthesis. In terms of biological role, master enzyme that delivers sulfur to a number of partners involved in Fe-S cluster assembly, tRNA modification or cofactor biosynthesis. Catalyzes the removal of elemental sulfur atoms from cysteine to produce alanine. Functions as a sulfur delivery protein for Fe-S cluster synthesis onto IscU, an Fe-S scaffold assembly protein, as well as other S acceptor proteins. This Proteus mirabilis (strain HI4320) protein is Cysteine desulfurase IscS.